A 902-amino-acid polypeptide reads, in one-letter code: Adhesion G-protein coupled receptor D1 (902 aa).

The signal sequence occupies residues 1–25; the sequence is MKKLLPLCCWHSWLLLFYCDFQVRG. The Extracellular segment spans residues 26 to 598; that stretch reads AHTRSHVHPG…GHQVALSSIS (573 aa). N-linked (GlcNAc...) asparagine glycans are attached at residues asparagine 68, asparagine 76, asparagine 83, asparagine 89, asparagine 121, asparagine 183, asparagine 217, asparagine 310, asparagine 330, asparagine 337, asparagine 347, asparagine 422, asparagine 504, asparagine 529, and asparagine 561. The region spanning 111–304 is the Pentraxin (PTX) domain; sequence KGVTFLYYRK…VNTMAPTNAY (194 aa). Residues 399–585 enclose the GAIN-B domain; it reads QVAIVGSSSM…AILMQVVPLE (187 aa). 2 cysteine pairs are disulfide-bonded: cysteine 538-cysteine 567 and cysteine 555-cysteine 569. The segment at 538 to 585 is GPS; it reads CAFLDFSSGEGIWSNQGCALTEGNLSYSICRCTHLTNFAILMQVVPLE. The interval 574–582 is stachel; the sequence is NFAILMQVV. Glutamine 591 lines the 17beta-hydroxy-5alpha-androstan-3-one pocket. A helical transmembrane segment spans residues 599 to 619; it reads YIGCSLSVLCLAITLVTFAVL. At 620–630 the chain is on the cytoplasmic side; that stretch reads SSVSTIRNQRY. Residues 631-651 traverse the membrane as a helical segment; sequence HIHANLSCAVLVAQVLLLISF. Residues 652–661 lie on the Extracellular side of the membrane; the sequence is RFEPGTAPCQ. Cysteine 660 and cysteine 732 are joined by a disulfide. Residues 662 to 682 traverse the membrane as a helical segment; that stretch reads VLAMLLHYFFLSAFAWMLVEG. Topologically, residues 683–702 are cytoplasmic; the sequence is LHLYSMVIKVFGSEDSKHRY. The chain crosses the membrane as a helical span at residues 703 to 723; that stretch reads YYGIGWGFPLLICIISIVFAM. At 724–739 the chain is on the extracellular side; the sequence is DSYGTSKNCWLSLGNG. Residues 740–760 traverse the membrane as a helical segment; the sequence is AIWAFVAPALFIIVVNIGILI. At 761–788 the chain is on the cytoplasmic side; that stretch reads AVTRVISQISAENYKIHGDPSAFKLTAK. A helical membrane pass occupies residues 789–809; that stretch reads AVAVLLPILGTSWVFGVLAVN. Residues 810-812 lie on the Extracellular side of the membrane; it reads NQA. Residues 813–833 traverse the membrane as a helical segment; it reads MVFQYMFAILNSLQGFFIFLF. The Cytoplasmic portion of the chain corresponds to 834–902; sequence HCLLNSEVRA…SGHRVDLSAV (69 aa). Positions 865-902 are disordered; that stretch reads KPFSSDIMNGTRPATGSTRLSPWDKSSHSGHRVDLSAV. The span at 870-884 shows a compositional bias: polar residues; the sequence is DIMNGTRPATGSTRL. A compositionally biased stretch (basic and acidic residues) spans 889 to 902; sequence KSSHSGHRVDLSAV.

This sequence belongs to the G-protein coupled receptor 2 family. Adhesion G-protein coupled receptor (ADGR) subfamily. As to quaternary structure, heterodimer of 2 chains generated by proteolytic processing; the large extracellular N-terminal fragment and the membrane-bound C-terminal fragment predominantly remain associated and non-covalently linked. Interacts with ESYT1; interaction takes place in absence of cytosolic calcium and inhibits the G protein-coupled receptor activity of ADGRD1. In terms of processing, autoproteolytically processed at the GPS region of the GAIN-B domain; this cleavage modulates receptor activity. Cleavage takes place early in the secretory pathway before N-glycosylation.

Its subcellular location is the cell membrane. Forms a heterodimer of 2 chains generated by proteolytic processing that remain associated through non-covalent interactions mediated by the GAIN-B domain. In the inactivated receptor, the Stachel sequence (also named stalk) is embedded in the GAIN-B domain, where it adopts a beta-strand conformation. On activation, the Stachel moves into the 7 transmembrane region and adopts a twisted hook-shaped configuration that forms contacts within the receptor, leading to coupling of a G-alpha protein, which activates signaling. The cleaved GAIN-B and N-terminal domains can then dissociate from the rest of the receptor. Interaction with ESYT1 in absence of cytosolic calcium inhibits the G protein-coupled receptor activity; interaction and inhibition is relieved when cytosolic calcium increases. In terms of biological role, adhesion G-protein coupled receptor (aGPCR) for androgen hormone 5alpha-dihydrotestosterone (5alpha-DHT), also named 17beta-hydroxy-5alpha-androstan-3-one, the most potent hormone among androgens. Also activated by methenolone drug. Ligand binding causes a conformation change that triggers signaling via guanine nucleotide-binding proteins (G proteins) and modulates the activity of downstream effectors, such as adenylate cyclase. ADGRD1 is coupled to G(s) G proteins and mediates activation of adenylate cyclase activity. Acts as a 5alpha-DHT receptor in muscle cells, thereby increasing intracellular cyclic AMP (cAMP) levels and enhancing muscle strength. This chain is Adhesion G-protein coupled receptor D1 (ADGRD1), found in Bos taurus (Bovine).